A 226-amino-acid chain; its full sequence is Clarin-3 (226 aa).

The helical transmembrane segment at 8–28 threads the bilayer; sequence LMFLSSFFTSLGSFIVICSIL. Asparagine 83 carries an N-linked (GlcNAc...) asparagine glycan. 3 helical membrane-spanning segments follow: residues 92–112, 129–149, and 181–201; these read VTIL…GFTF, VYTW…LFVA, and FWLI…IIFY.

This sequence belongs to the clarin family.

It is found in the membrane. The polypeptide is Clarin-3 (CLRN3) (Homo sapiens (Human)).